The following is a 407-amino-acid chain: Phosphopentomutase (407 aa).

Mn(2+) is bound by residues D10, D306, H311, D347, H348, and H359.

This sequence belongs to the phosphopentomutase family. Mn(2+) serves as cofactor.

The protein localises to the cytoplasm. The enzyme catalyses 2-deoxy-alpha-D-ribose 1-phosphate = 2-deoxy-D-ribose 5-phosphate. It catalyses the reaction alpha-D-ribose 1-phosphate = D-ribose 5-phosphate. Its pathway is carbohydrate degradation; 2-deoxy-D-ribose 1-phosphate degradation; D-glyceraldehyde 3-phosphate and acetaldehyde from 2-deoxy-alpha-D-ribose 1-phosphate: step 1/2. Isomerase that catalyzes the conversion of deoxy-ribose 1-phosphate (dRib-1-P) and ribose 1-phosphate (Rib-1-P) to deoxy-ribose 5-phosphate (dRib-5-P) and ribose 5-phosphate (Rib-5-P), respectively. The polypeptide is Phosphopentomutase (Salmonella schwarzengrund (strain CVM19633)).